The chain runs to 459 residues: ATP synthase subunit beta (459 aa).

Residue 148–155 (GGAGVGKT) participates in ATP binding.

It belongs to the ATPase alpha/beta chains family. F-type ATPases have 2 components, CF(1) - the catalytic core - and CF(0) - the membrane proton channel. CF(1) has five subunits: alpha(3), beta(3), gamma(1), delta(1), epsilon(1). CF(0) has three main subunits: a(1), b(2) and c(9-12). The alpha and beta chains form an alternating ring which encloses part of the gamma chain. CF(1) is attached to CF(0) by a central stalk formed by the gamma and epsilon chains, while a peripheral stalk is formed by the delta and b chains.

The protein resides in the cell inner membrane. The enzyme catalyses ATP + H2O + 4 H(+)(in) = ADP + phosphate + 5 H(+)(out). Functionally, produces ATP from ADP in the presence of a proton gradient across the membrane. The catalytic sites are hosted primarily by the beta subunits. This chain is ATP synthase subunit beta, found in Thiobacillus denitrificans (strain ATCC 25259 / T1).